We begin with the raw amino-acid sequence, 193 residues long: MSSSVQVLSETIEIGKVVTASDEIAKRFNNLFPSIPMMLATFIAFVIVFLLLFFFLYNPVKKMIRKRQEFIQSQIDDSIKAKEDSLAKLSQAQAELIESHKQSVNIVNNAKSKAQEILASYKNKAISDANRLIEETQIDLNERKKEFDKNSRILIAETATEIAQRILKREISKSTQDEIIKDFLEDKTPIEDI.

The chain crosses the membrane as a helical span at residues 35–55; it reads IPMMLATFIAFVIVFLLLFFF.

It belongs to the ATPase B chain family. In terms of assembly, F-type ATPases have 2 components, F(1) - the catalytic core - and F(0) - the membrane proton channel. F(1) has five subunits: alpha(3), beta(3), gamma(1), delta(1), epsilon(1). F(0) has three main subunits: a(1), b(2) and c(10-14). The alpha and beta chains form an alternating ring which encloses part of the gamma chain. F(1) is attached to F(0) by a central stalk formed by the gamma and epsilon chains, while a peripheral stalk is formed by the delta and b chains.

It is found in the cell membrane. Functionally, f(1)F(0) ATP synthase produces ATP from ADP in the presence of a proton or sodium gradient. F-type ATPases consist of two structural domains, F(1) containing the extramembraneous catalytic core and F(0) containing the membrane proton channel, linked together by a central stalk and a peripheral stalk. During catalysis, ATP synthesis in the catalytic domain of F(1) is coupled via a rotary mechanism of the central stalk subunits to proton translocation. Component of the F(0) channel, it forms part of the peripheral stalk, linking F(1) to F(0). The chain is ATP synthase subunit b from Mycoplasmopsis synoviae (strain 53) (Mycoplasma synoviae).